We begin with the raw amino-acid sequence, 518 residues long: Cytochrome P450 1A1 (518 aa).

The interval serine 33–leucine 44 is mitochondrial targeting signal. The O-linked (GlcNAc) serine glycan is linked to serine 71. Phenylalanine 228 is a binding site for substrate. Cysteine 461 serves as a coordination point for heme.

The protein belongs to the cytochrome P450 family. As to quaternary structure, interacts with cytosolic chaperones HSP70 and HSP90; this interaction is required for initial targeting to mitochondria. Interacts (via mitochondrial targeting signal) with TOMM40 (via N-terminus); this interaction is required for translocation across the mitochondrial outer membrane. It depends on heme as a cofactor.

It is found in the endoplasmic reticulum membrane. It localises to the mitochondrion inner membrane. Its subcellular location is the microsome membrane. The protein localises to the cytoplasm. It catalyses the reaction an organic molecule + reduced [NADPH--hemoprotein reductase] + O2 = an alcohol + oxidized [NADPH--hemoprotein reductase] + H2O + H(+). It carries out the reaction estrone + reduced [NADPH--hemoprotein reductase] + O2 = 2-hydroxyestrone + oxidized [NADPH--hemoprotein reductase] + H2O + H(+). The catalysed reaction is estrone + reduced [NADPH--hemoprotein reductase] + O2 = 4-hydroxyestrone + oxidized [NADPH--hemoprotein reductase] + H2O + H(+). The enzyme catalyses estrone + reduced [NADPH--hemoprotein reductase] + O2 = 6alpha-hydroxyestrone + oxidized [NADPH--hemoprotein reductase] + H2O + H(+). It catalyses the reaction estrone + reduced [NADPH--hemoprotein reductase] + O2 = 15alpha-hydroxyestrone + oxidized [NADPH--hemoprotein reductase] + H2O + H(+). It carries out the reaction estrone + reduced [NADPH--hemoprotein reductase] + O2 = 16alpha-hydroxyestrone + oxidized [NADPH--hemoprotein reductase] + H2O + H(+). The catalysed reaction is 17beta-estradiol + reduced [NADPH--hemoprotein reductase] + O2 = 2-hydroxy-17beta-estradiol + oxidized [NADPH--hemoprotein reductase] + H2O + H(+). The enzyme catalyses 17beta-estradiol + reduced [NADPH--hemoprotein reductase] + O2 = 4-hydroxy-17beta-estradiol + oxidized [NADPH--hemoprotein reductase] + H2O + H(+). It catalyses the reaction 17beta-estradiol + reduced [NADPH--hemoprotein reductase] + O2 = 6alpha-hydroxy-17beta-estradiol + oxidized [NADPH--hemoprotein reductase] + H2O + H(+). It carries out the reaction 17beta-estradiol + reduced [NADPH--hemoprotein reductase] + O2 = 7alpha-hydroxy-17beta-estradiol + oxidized [NADPH--hemoprotein reductase] + H2O + H(+). The catalysed reaction is 17beta-estradiol + reduced [NADPH--hemoprotein reductase] + O2 = 15alpha-hydroxy-17beta-estradiol + oxidized [NADPH--hemoprotein reductase] + H2O + H(+). The enzyme catalyses (5Z,8Z,11Z)-eicosatrienoate + reduced [NADPH--hemoprotein reductase] + O2 = 19-hydroxy-(5Z,8Z,11Z)-eicosatrienoate + oxidized [NADPH--hemoprotein reductase] + H2O + H(+). It catalyses the reaction (5Z,8Z,11Z,14Z)-eicosatetraenoate + reduced [NADPH--hemoprotein reductase] + O2 = 16-hydroxy-(5Z,8Z,11Z,14Z)-eicosatetraenoate + oxidized [NADPH--hemoprotein reductase] + H2O + H(+). It carries out the reaction (5Z,8Z,11Z,14Z)-eicosatetraenoate + reduced [NADPH--hemoprotein reductase] + O2 = 17-hydroxy-(5Z,8Z,11Z,14Z)-eicosatetraenoate + oxidized [NADPH--hemoprotein reductase] + H2O + H(+). The catalysed reaction is (5Z,8Z,11Z,14Z)-eicosatetraenoate + reduced [NADPH--hemoprotein reductase] + O2 = 18-hydroxy-(5Z,8Z,11Z,14Z)-eicosatetraenoate + oxidized [NADPH--hemoprotein reductase] + H2O + H(+). The enzyme catalyses (5Z,8Z,11Z,14Z)-eicosatetraenoate + reduced [NADPH--hemoprotein reductase] + O2 = 19-hydroxy-(5Z,8Z,11Z,14Z)-eicosatetraenoate + oxidized [NADPH--hemoprotein reductase] + H2O + H(+). It catalyses the reaction (5Z,8Z,11Z,14Z,17Z)-eicosapentaenoate + reduced [NADPH--hemoprotein reductase] + O2 = 19-hydroxy-(5Z,8Z,11Z,14Z,17Z)-eicosapentaenoate + oxidized [NADPH--hemoprotein reductase] + H2O + H(+). It carries out the reaction (5Z,8Z,11Z,14Z)-eicosatetraenoate + reduced [NADPH--hemoprotein reductase] + O2 = (8R,9S)-epoxy-(5Z,11Z,14Z)-eicosatrienoate + oxidized [NADPH--hemoprotein reductase] + H2O + H(+). The catalysed reaction is (5Z,8Z,11Z,14Z)-eicosatetraenoate + reduced [NADPH--hemoprotein reductase] + O2 = (11R,12S)-epoxy-(5Z,8Z,14Z)-eicosatrienoate + oxidized [NADPH--hemoprotein reductase] + H2O + H(+). The enzyme catalyses (5Z,8Z,11Z,14Z)-eicosatetraenoate + reduced [NADPH--hemoprotein reductase] + O2 = (14S,15R)-epoxy-(5Z,8Z,11Z)-eicosatrienoate + oxidized [NADPH--hemoprotein reductase] + H2O + H(+). It catalyses the reaction (5Z,8Z,11Z,14Z)-eicosatetraenoate + reduced [NADPH--hemoprotein reductase] + O2 = (14R,15S)-epoxy-(5Z,8Z,11Z)-eicosatrienoate + oxidized [NADPH--hemoprotein reductase] + H2O + H(+). It carries out the reaction (5Z,8Z,11Z,14Z,17Z)-eicosapentaenoate + reduced [NADPH--hemoprotein reductase] + O2 = (17R,18S)-epoxy-(5Z,8Z,11Z,14Z)-eicosatetraenoate + oxidized [NADPH--hemoprotein reductase] + H2O + H(+). The catalysed reaction is (4Z,7Z,10Z,13Z,16Z,19Z)-docosahexaenoate + reduced [NADPH--hemoprotein reductase] + O2 = (19S,20R)-epoxy-(4Z,7Z,10Z,13Z,16Z)-docosapentaenoate + oxidized [NADPH--hemoprotein reductase] + H2O + H(+). The enzyme catalyses (4Z,7Z,10Z,13Z,16Z,19Z)-docosahexaenoate + reduced [NADPH--hemoprotein reductase] + O2 = (19R,20S)-epoxy-(4Z,7Z,10Z,13Z,16Z)-docosapentaenoate + oxidized [NADPH--hemoprotein reductase] + H2O + H(+). It catalyses the reaction all-trans-retinol + reduced [NADPH--hemoprotein reductase] + O2 = all-trans-retinal + oxidized [NADPH--hemoprotein reductase] + 2 H2O + H(+). It carries out the reaction all-trans-retinal + reduced [NADPH--hemoprotein reductase] + O2 = all-trans-retinoate + oxidized [NADPH--hemoprotein reductase] + H2O + 2 H(+). The catalysed reaction is (13S)-hydroperoxy-(9Z,11E)-octadecadienoate = 13-oxo-(9Z,11E)-octadecadienoate + H2O. The enzyme catalyses (12S)-hydroperoxy-(5Z,8Z,10E,14Z)-eicosatetraenoate = 12-oxo-(5Z,8Z,10E,14Z)-eicosatetraenoate + H2O. It catalyses the reaction (15S)-hydroperoxy-(5Z,8Z,11Z,13E)-eicosatetraenoate = 15-oxo-(5Z,8Z,11Z,13E)-eicosatetraenoate + H2O. It carries out the reaction (5S)-hydroperoxy-(6E,8Z,11Z,14Z)-eicosatetraenoate = 5-oxo-(6E,8Z,11Z,14Z)-eicosatetraenoate + H2O. It participates in steroid hormone biosynthesis. The protein operates within lipid metabolism; fatty acid metabolism. Its pathway is cofactor metabolism; retinol metabolism. Its function is as follows. A cytochrome P450 monooxygenase involved in the metabolism of various endogenous substrates, including fatty acids, steroid hormones and vitamins. Mechanistically, uses molecular oxygen inserting one oxygen atom into a substrate, and reducing the second into a water molecule, with two electrons provided by NADPH via cytochrome P450 reductase (CPR; NADPH-ferrihemoprotein reductase). Catalyzes the hydroxylation of carbon-hydrogen bonds. Exhibits high catalytic activity for the formation of hydroxyestrogens from estrone (E1) and 17beta-estradiol (E2), namely 2-hydroxy E1 and E2, as well as D-ring hydroxylated E1 and E2 at the C15alpha and C16alpha positions. Displays different regioselectivities for polyunsaturated fatty acids (PUFA) hydroxylation. Catalyzes the epoxidation of double bonds of certain PUFA. Converts arachidonic acid toward epoxyeicosatrienoic acid (EET) regioisomers, 8,9-, 11,12-, and 14,15-EET, that function as lipid mediators in the vascular system. Displays an absolute stereoselectivity in the epoxidation of eicosapentaenoic acid (EPA) producing the 17(R),18(S) enantiomer. May play an important role in all-trans retinoic acid biosynthesis in extrahepatic tissues. Catalyzes two successive oxidative transformation of all-trans retinol to all-trans retinal and then to the active form all-trans retinoic acid. May also participate in eicosanoids metabolism by converting hydroperoxide species into oxo metabolites (lipoxygenase-like reaction, NADPH-independent). In Oryctolagus cuniculus (Rabbit), this protein is Cytochrome P450 1A1 (CYP1A1).